The sequence spans 229 residues: Large ribosomal subunit protein uL1 (229 aa).

Belongs to the universal ribosomal protein uL1 family. In terms of assembly, part of the 50S ribosomal subunit.

Its function is as follows. Binds directly to 23S rRNA. The L1 stalk is quite mobile in the ribosome, and is involved in E site tRNA release. In terms of biological role, protein L1 is also a translational repressor protein, it controls the translation of the L11 operon by binding to its mRNA. The sequence is that of Large ribosomal subunit protein uL1 from Actinobacillus succinogenes (strain ATCC 55618 / DSM 22257 / CCUG 43843 / 130Z).